We begin with the raw amino-acid sequence, 686 residues long: Methionine--tRNA ligase (686 aa).

The short motif at 15–25 (PYANGSIHLGH) is the 'HIGH' region element. Cysteine 146, cysteine 149, cysteine 159, and cysteine 162 together coordinate Zn(2+). The short motif at 332-336 (KMSKS) is the 'KMSKS' region element. ATP is bound at residue lysine 335. In terms of domain architecture, tRNA-binding spans 585 to 686 (AFEAVDMRIA…EGAQPGMRVM (102 aa)).

It belongs to the class-I aminoacyl-tRNA synthetase family. MetG type 1 subfamily. In terms of assembly, homodimer. Zn(2+) serves as cofactor.

The protein resides in the cytoplasm. It catalyses the reaction tRNA(Met) + L-methionine + ATP = L-methionyl-tRNA(Met) + AMP + diphosphate. Functionally, is required not only for elongation of protein synthesis but also for the initiation of all mRNA translation through initiator tRNA(fMet) aminoacylation. This is Methionine--tRNA ligase from Aliivibrio salmonicida (strain LFI1238) (Vibrio salmonicida (strain LFI1238)).